The sequence spans 928 residues: DNA polymerase I (928 aa).

Residues 1-323 (MVQIPENPLI…IDESPSEPAA (323 aa)) enclose the 5'-3' exonuclease domain. The 3'-5' exonuclease domain occupies 324–517 (ALSYENYVTI…LHLKMWPELQ (194 aa)). Residues 324-928 (ALSYENYVTI…GSGENWDQAH (605 aa)) form a klenow fragment region. Positions 521 to 928 (GPLNVFENIE…GSGENWDQAH (408 aa)) are polymerase.

It belongs to the DNA polymerase type-A family. Single-chain monomer with multiple functions.

It carries out the reaction DNA(n) + a 2'-deoxyribonucleoside 5'-triphosphate = DNA(n+1) + diphosphate. Functionally, in addition to polymerase activity, this DNA polymerase exhibits 3'-5' and 5'-3' exonuclease activity. It is able to utilize nicked circular duplex DNA as a template and can unwind the parental DNA strand from its template. The protein is DNA polymerase I (polA) of Salmonella typhimurium (strain LT2 / SGSC1412 / ATCC 700720).